Reading from the N-terminus, the 212-residue chain is Guanylate kinase (212 aa).

In terms of domain architecture, Guanylate kinase-like spans 5 to 187 (GILCIISAPS…ALMHLQSIML (183 aa)). 12 to 19 (APSGTGKS) contacts ATP.

The protein belongs to the guanylate kinase family.

The protein localises to the cytoplasm. The catalysed reaction is GMP + ATP = GDP + ADP. In terms of biological role, essential for recycling GMP and indirectly, cGMP. The polypeptide is Guanylate kinase (Blochmanniella pennsylvanica (strain BPEN)).